Here is a 232-residue protein sequence, read N- to C-terminus: MTVSTTSLCTPIVKICGLTVEAAHCAISSGADLIGMILVPDLKRTVQQTKLKAISRAVTRIPGVPTSPSRGIDRPSHGLVRGTFSADYTSWPLVVGVFRNQSLDEVLRMLRNYDLDIVQLHGSEPLHQWTREIPVPVIKKFGLGEDDLMAPGLHAVTLLDGGAGGEGQKISWEGLPGSGAFMLAGGLTVDNVAVAVKIPNVAGVDVSSGVATDGMQDLEKNCRCLFRNAKGW.

This sequence belongs to the TrpF family.

It catalyses the reaction N-(5-phospho-beta-D-ribosyl)anthranilate = 1-(2-carboxyphenylamino)-1-deoxy-D-ribulose 5-phosphate. The protein operates within amino-acid biosynthesis; L-tryptophan biosynthesis; L-tryptophan from chorismate: step 3/5. This Lipomyces starkeyi (Oleaginous yeast) protein is N-(5'-phosphoribosyl)anthranilate isomerase (TRP1).